Here is a 124-residue protein sequence, read N- to C-terminus: Small ribosomal subunit protein uS13 (124 aa).

The interval 89–124 (GRRHRQGLPVRGQRTKTNARTRKGPKRTVAGKKKAK) is disordered. Basic residues predominate over residues 101–124 (QRTKTNARTRKGPKRTVAGKKKAK).

Belongs to the universal ribosomal protein uS13 family. Part of the 30S ribosomal subunit. Forms a loose heterodimer with protein S19. Forms two bridges to the 50S subunit in the 70S ribosome.

Functionally, located at the top of the head of the 30S subunit, it contacts several helices of the 16S rRNA. In the 70S ribosome it contacts the 23S rRNA (bridge B1a) and protein L5 of the 50S subunit (bridge B1b), connecting the 2 subunits; these bridges are implicated in subunit movement. Contacts the tRNAs in the A and P-sites. This chain is Small ribosomal subunit protein uS13, found in Nocardioides sp. (strain ATCC BAA-499 / JS614).